The primary structure comprises 291 residues: ATP synthase gamma chain (291 aa).

It belongs to the ATPase gamma chain family. F-type ATPases have 2 components, CF(1) - the catalytic core - and CF(0) - the membrane proton channel. CF(1) has five subunits: alpha(3), beta(3), gamma(1), delta(1), epsilon(1). CF(0) has three main subunits: a, b and c.

The protein resides in the cell inner membrane. Produces ATP from ADP in the presence of a proton gradient across the membrane. The gamma chain is believed to be important in regulating ATPase activity and the flow of protons through the CF(0) complex. This chain is ATP synthase gamma chain, found in Pelagibacter ubique (strain HTCC1062).